We begin with the raw amino-acid sequence, 131 residues long: Methylglyoxal synthase (131 aa).

An MGS-like domain is found at 1 to 131 (MKIALIAHDK…GDLDYRKLRK (131 aa)). Substrate-binding positions include histidine 8, lysine 12, 34–37 (TGTT), and 54–55 (SG). Residue aspartate 60 is the Proton donor/acceptor of the active site. Residue histidine 87 coordinates substrate.

This sequence belongs to the methylglyoxal synthase family.

It catalyses the reaction dihydroxyacetone phosphate = methylglyoxal + phosphate. Its function is as follows. Catalyzes the formation of methylglyoxal from dihydroxyacetone phosphate. This is Methylglyoxal synthase from Bacillus cereus (strain AH820).